Here is a 173-residue protein sequence, read N- to C-terminus: Shikimate kinase 1 (173 aa).

Residue 14–19 (GAGKST) participates in ATP binding. S18 is a Mg(2+) binding site. 3 residues coordinate substrate: D36, R60, and G82. Residue R120 coordinates ATP. Residue R140 participates in substrate binding. Q157 lines the ATP pocket.

It belongs to the shikimate kinase family. In terms of assembly, monomer. The cofactor is Mg(2+).

It localises to the cytoplasm. It catalyses the reaction shikimate + ATP = 3-phosphoshikimate + ADP + H(+). It functions in the pathway metabolic intermediate biosynthesis; chorismate biosynthesis; chorismate from D-erythrose 4-phosphate and phosphoenolpyruvate: step 5/7. Its function is as follows. Catalyzes the specific phosphorylation of the 3-hydroxyl group of shikimic acid using ATP as a cosubstrate. The sequence is that of Shikimate kinase 1 from Pectobacterium atrosepticum (strain SCRI 1043 / ATCC BAA-672) (Erwinia carotovora subsp. atroseptica).